Here is an 82-residue protein sequence, read N- to C-terminus: Penaeidin-3f (82 aa).

A signal peptide spans 1-19 (MRLVACLVFLASFALVCQG). Gln20 is subject to Pyrrolidone carboxylic acid. 3 disulfide bridges follow: Cys51/Cys66, Cys55/Cys73, and Cys67/Cys74. Ser81 bears the Serine amide mark.

This sequence belongs to the penaeidin family.

Its subcellular location is the cytoplasmic granule. Antibacterial and antifungal activity. Presents chitin-binding activity. The sequence is that of Penaeidin-3f from Penaeus vannamei (Whiteleg shrimp).